The sequence spans 138 residues: Putative nickel-responsive regulator (138 aa).

Histidine 78, histidine 89, histidine 91, and cysteine 97 together coordinate Ni(2+).

The protein belongs to the transcriptional regulatory CopG/NikR family. It depends on Ni(2+) as a cofactor.

In terms of biological role, transcriptional regulator. This chain is Putative nickel-responsive regulator, found in Thermococcus kodakarensis (strain ATCC BAA-918 / JCM 12380 / KOD1) (Pyrococcus kodakaraensis (strain KOD1)).